A 259-amino-acid chain; its full sequence is Global transcriptional regulator CodY (259 aa).

Positions 1-155 are GAF domain; sequence MNLLEKTRKI…GATVVGMEIL (155 aa). The H-T-H motif DNA-binding region spans 203-222; sequence ASKIADRVGITRSVIVNALR. Serine 215 bears the Phosphoserine mark.

It belongs to the CodY family.

It localises to the cytoplasm. DNA-binding global transcriptional regulator which is involved in the adaptive response to starvation and acts by directly or indirectly controlling the expression of numerous genes in response to nutrient availability. During rapid exponential growth, CodY is highly active and represses genes whose products allow adaptation to nutrient depletion. This is Global transcriptional regulator CodY from Geobacillus thermodenitrificans (strain NG80-2).